Consider the following 140-residue polypeptide: Relaxin-3 (140 aa).

Positions 1-26 are cleaved as a signal peptide; that stretch reads MAKRPLLLLLLAVWVLAGELWLRTEA. 3 disulfides stabilise this stretch: Cys-36–Cys-127, Cys-48–Cys-140, and Cys-126–Cys-131. Residues 56–116 constitute a propeptide, connecting peptide; that stretch reads SDMLAHEALG…RTPGALRGSR (61 aa).

The protein belongs to the insulin family. As to quaternary structure, heterodimer of a B chain and an A chain linked by two disulfide bonds.

It is found in the secreted. May play a role in neuropeptide signaling processes. Ligand for LGR7, RXFP3 and RXFP4. This chain is Relaxin-3 (RLN3), found in Sus scrofa (Pig).